Here is a 297-residue protein sequence, read N- to C-terminus: Indole-3-glycerol phosphate synthase (297 aa).

Belongs to the TrpC family.

The enzyme catalyses 1-(2-carboxyphenylamino)-1-deoxy-D-ribulose 5-phosphate + H(+) = (1S,2R)-1-C-(indol-3-yl)glycerol 3-phosphate + CO2 + H2O. Its pathway is amino-acid biosynthesis; L-tryptophan biosynthesis; L-tryptophan from chorismate: step 4/5. The protein is Indole-3-glycerol phosphate synthase of Trichodesmium erythraeum (strain IMS101).